A 310-amino-acid chain; its full sequence is p-hydroxybenzoic acid efflux pump subunit AaeA (310 aa).

Residues 12-32 (AITVVLVILAFIAIFNAWVYY) traverse the membrane as a helical segment.

Belongs to the membrane fusion protein (MFP) (TC 8.A.1) family.

The protein resides in the cell inner membrane. Its function is as follows. Forms an efflux pump with AaeB. The polypeptide is p-hydroxybenzoic acid efflux pump subunit AaeA (Shigella flexneri).